The primary structure comprises 240 residues: UDP-2,3-diacylglucosamine hydrolase (240 aa).

Residues Asp8, His10, Asp41, Asn79, and His114 each coordinate Mn(2+). 79–80 (NR) contacts substrate. Residues Asp122, Ser160, Asn164, Lys167, and His195 each contribute to the substrate site. Residues His195 and His197 each coordinate Mn(2+).

This sequence belongs to the LpxH family. The cofactor is Mn(2+).

Its subcellular location is the cell inner membrane. It catalyses the reaction UDP-2-N,3-O-bis[(3R)-3-hydroxytetradecanoyl]-alpha-D-glucosamine + H2O = 2-N,3-O-bis[(3R)-3-hydroxytetradecanoyl]-alpha-D-glucosaminyl 1-phosphate + UMP + 2 H(+). Its pathway is glycolipid biosynthesis; lipid IV(A) biosynthesis; lipid IV(A) from (3R)-3-hydroxytetradecanoyl-[acyl-carrier-protein] and UDP-N-acetyl-alpha-D-glucosamine: step 4/6. In terms of biological role, hydrolyzes the pyrophosphate bond of UDP-2,3-diacylglucosamine to yield 2,3-diacylglucosamine 1-phosphate (lipid X) and UMP by catalyzing the attack of water at the alpha-P atom. Involved in the biosynthesis of lipid A, a phosphorylated glycolipid that anchors the lipopolysaccharide to the outer membrane of the cell. The protein is UDP-2,3-diacylglucosamine hydrolase of Escherichia coli O127:H6 (strain E2348/69 / EPEC).